The following is a 1149-amino-acid chain: Eukaryotic translation initiation factor 3 subunit A (1149 aa).

A PCI domain is found at 317-498 (IQRMTSHVLI…HSVHFGTDLS (182 aa)). Disordered stretches follow at residues 496 to 515 (DLSE…QSMP) and 811 to 1149 (EEER…KHHR). The segment covering 811 to 885 (EEERRRIEEE…APRGEKEERG (75 aa)) has biased composition (basic and acidic residues). Gly residues predominate over residues 886–895 (GGGGGGGAWR). Positions 908–924 (AKPESDWRNAREAREPA) are enriched in basic and acidic residues. Over residues 925–937 (PESAGASSAAAPA) the composition is skewed to low complexity. Basic and acidic residues-rich tracts occupy residues 961–970 (RPPRGDDREP), 1005–1095 (GPMR…DRRG), and 1113–1132 (EPAK…KEAR).

It belongs to the eIF-3 subunit A family. Component of the eukaryotic translation initiation factor 3 (eIF-3) complex.

It localises to the cytoplasm. Its function is as follows. RNA-binding component of the eukaryotic translation initiation factor 3 (eIF-3) complex, which is involved in protein synthesis of a specialized repertoire of mRNAs and, together with other initiation factors, stimulates binding of mRNA and methionyl-tRNAi to the 40S ribosome. The eIF-3 complex specifically targets and initiates translation of a subset of mRNAs involved in cell proliferation. This chain is Eukaryotic translation initiation factor 3 subunit A, found in Culex quinquefasciatus (Southern house mosquito).